Reading from the N-terminus, the 86-residue chain is MKQILLISLVVVLAVFAFNVAEGCDATCQFRKAIDDCQKQAHHSNVLQTSVQTTATFTSMDTSQLPGNSVFKECMKQKKKEFSSGK.

Positions 1 to 23 (MKQILLISLVVVLAVFAFNVAEG) are cleaved as a signal peptide. 2 cysteine pairs are disulfide-bonded: Cys24/Cys28 and Cys37/Cys74.

As to quaternary structure, interacts with human ADCYAP1R1. In terms of tissue distribution, salivary gland (at protein level).

It localises to the secreted. In terms of biological role, potent vasodilator. Activates mammalian ADCYAP1R1, a PAC1 receptor, and induces cAMP accumulation in host cells. Causes the development of erythema following superficial injection into the rabbit or human skin. Influences adaptive immune responses mediated by host dendritic cells. Reduces surface expression of CD80 on host dendritic cells stimulated with lipopolysaccharides (LPS) and induces concomitant increase in CD86 expression on a subpopulation of these cells. Redirects cytokine secretion by LPS-activated host dendritic cells toward type 2 responses: decreases secretion of TNF-alpha/TNF, IL-12p40/IL12B and IFN-gamma/IFNG, and increases secretion of IL6 and IL10. Reduces ability of host bone marrow-derived dendritic cells to stimulate proliferation of CD4(+) T-cells. Reprograms the effect of LPS-activated host dendritic cells on cytokine secretion profiles in host T-cells: decreases secretion of TNF-alpha/TNF and IFN-gamma/IFNG, increases secretion of IL6 and IL13, and increases secretion of pro-inflammatory cytokine IL-1beta/IL1B in mixed lymphocyte reaction (MLR) cultures. Reduces LPS-induced up-regulation of CCR7 in activated host dendritic cells. Inhibits IFN-gamma/IFNG and IL-12p40/IL12B production by human peripheral blood mononuclear cells. Increases IL6 and decreases TNF-alpha/TNF production by LPS-stimulated human monocytes. (Microbial infection) Probably plays a critical role in the enhancement of Leishmania infectivity in the host attributed to sand fly saliva. This chain is Maxadilan, found in Lutzomyia longipalpis (Sand fly).